A 310-amino-acid chain; its full sequence is Protein YIP5 (310 aa).

The disordered stretch occupies residues 1-84 (MPSNNSSFLD…VIGQNDNDGL (84 aa)). Over residues 10–22 (DIDDDLEGVDDFG) the composition is skewed to acidic residues. Over residues 35-57 (DSPNMNNSTAGKGSEFYNTTGSK) the composition is skewed to polar residues. S60 is modified (phosphoserine). A run of 5 helical transmembrane segments spans residues 131 to 151 (TDLYGAVWITATVVMINFTMS), 181 to 201 (LHSIWLFYGYTFGVPFITMQV), 220 to 240 (LISVYGYANLIWIPVCVILNI), 249 to 269 (TVQAIQWAIVALGWAQSSYFL), and 290 to 310 (SIIVVVALHTLFCLLFRFIIF).

The protein belongs to the YIP1 family. Interacts with SNX3, TVP18, TVP23, YIP1 and YIP4. Interacts with SEC4; The C-terminal cysteines in the Rab GTPase SEC4 are essential for the interaction. Interacts with YPT1, YPT6, YPT7, YPT10, YPT11, YPT31, YPT32 and YPT52; These proteins are all Rab GTPases.

The protein resides in the membrane. Possible role in vesicle-mediated transport. May be involved in proper membrane localization of Rab GTPases. The polypeptide is Protein YIP5 (YIP5) (Saccharomyces cerevisiae (strain ATCC 204508 / S288c) (Baker's yeast)).